The sequence spans 442 residues: Protein PhoH2 (442 aa).

The PINc domain maps to 3–135 (KIYVLDTNVL…LVSKDVLVRV (133 aa)). 259–266 (GKAGTGKT) is a binding site for ATP.

The protein in the N-terminal section; belongs to the PINc/VapC protein family. In the C-terminal section; belongs to the PhoH family.

It carries out the reaction n ATP + n H2O + wound RNA = n ADP + n phosphate + unwound RNA.. The catalysed reaction is ATP + H2O = ADP + phosphate + H(+). It catalyses the reaction GTP + H2O = GDP + phosphate + H(+). In terms of biological role, unwinds and/or cleaves 5'-tailed RNA in vitro. Has ATPase and GTPase activities. Unlike the protein in mycobacteria there does not seem to be an antitoxin gene upstream, suggesting this is not a toxin-antitoxin system. This is Protein PhoH2 from Bacillus subtilis (strain 168).